A 799-amino-acid polypeptide reads, in one-letter code: MKVESRSHNVHHAHGEEEKVMTRKQKAESKAHEVEHSPKKAKVEDEKNGHTNGKSASDVVQEYDEFCKATNEQLSLEQMKEILEANDLDSSGSDLEITRRCQDLLFFGALEKCMVCNGNMEFDGRRYGCRGFYSEWSSCTFSTREPPRKDEPIKLPDSVQNSPVSDLLKKYQDPSKRPQRDLGLAIKPFTGMMISLMGRLNRTHLNFSGASCLVASPAERDRGGTSKLADAMERGIPVVREAWLTDSIEKQEPQPLESYDLVSDLSVDGKGIPWDKQDPGEEAIESLSAELKLYGKRGVYKDTKLHEQDGKIFEKDGILYNCAFSLCDQGRKLNDYCVMQLIVVPENSLHLYFKKGRVGDDPSAEERLEECENVDNAIKEFVRLFEEITGNEFESWEREKKFQKKPLKFYPIDMDDGVEVRHGALGLRQLGIAATHCKLEPMVANFMKVLCSQEIYKYALMEMGYDSPDLPIGMVTNLHLKRCEEILLEFIEKVKTLKETGPKADAIWSDFSQKWFTLMHSTRPFIFRDYQEIADHAAAALEGVRDITLASHLIGDMSGSTIDDPLSDTYKKLGCSITPLEKNSNDYEMIVKYLEKTYEPVKVGDIEYGVSVENIFTVESSACPSYADIVKMPNKVLLWCGSRSSNLLRHLHKGFLPAICSLPVPGYMFGKAIVCSDAAAEAARYGFTAVDRPEGFLVLAIASLGNEITELKSPPEDTTSLEEKKVGVKGLGKKKTDESEHFVWKDDIKVPCGSIIASEHEDSPLEYNEYAVYDPKQVRISYLVGVKYEEKDAVIDTAE.

The span at 1–49 (MKVESRSHNVHHAHGEEEKVMTRKQKAESKAHEVEHSPKKAKVEDEKNG) shows a compositional bias: basic and acidic residues. The disordered stretch occupies residues 1 to 55 (MKVESRSHNVHHAHGEEEKVMTRKQKAESKAHEVEHSPKKAKVEDEKNGHTNGKS). In terms of domain architecture, PADR1 zinc-binding spans 39–188 (KKAKVEDEKN…QRDLGLAIKP (150 aa)). The 35-residue stretch at 71–105 (NEQLSLEQMKEILEANDLDSSGSDLEITRRCQDLL) folds into the SAP domain. The segment at 108 to 152 (GALEKCMVCNGNMEFDGRRYGCRGFYSEWSSCTFSTREPPRKDEP) is zinc ribbon. Residues Cys-113, Cys-116, Cys-129, and Cys-139 each contribute to the Zn(2+) site. The interval 140-161 (TFSTREPPRKDEPIKLPDSVQN) is disordered. Over residues 145-154 (EPPRKDEPIK) the composition is skewed to basic and acidic residues. The BRCT domain maps to 189–261 (FTGMMISLMG…EPQPLESYDL (73 aa)). In terms of domain architecture, WGR spans 309 to 409 (DGKIFEKDGI…KKFQKKPLKF (101 aa)). The region spanning 436-555 (HCKLEPMVAN…DITLASHLIG (120 aa)) is the PARP alpha-helical domain. Residues 564 to 795 (DPLSDTYKKL…VKYEEKDAVI (232 aa)) enclose the PARP catalytic domain.

It belongs to the ARTD/PARP family.

It is found in the nucleus. The catalysed reaction is L-aspartyl-[protein] + NAD(+) = 4-O-(ADP-D-ribosyl)-L-aspartyl-[protein] + nicotinamide. It catalyses the reaction L-glutamyl-[protein] + NAD(+) = 5-O-(ADP-D-ribosyl)-L-glutamyl-[protein] + nicotinamide. In terms of biological role, involved in the base excision repair (BER) pathway, by catalyzing the poly(ADP-ribosyl)ation of a limited number of acceptor proteins involved in chromatin architecture and in DNA metabolism. This modification follows DNA damages and appears as an obligatory step in a detection/signaling pathway leading to the reparation of DNA strand breaks. This is Protein ADP-ribosyltransferase PARP3 (PARP3) from Medicago truncatula (Barrel medic).